A 305-amino-acid chain; its full sequence is Sulfate adenylyltransferase subunit 2 (305 aa).

Belongs to the PAPS reductase family. CysD subfamily. In terms of assembly, heterodimer composed of CysD, the smaller subunit, and CysN.

The catalysed reaction is sulfate + ATP + H(+) = adenosine 5'-phosphosulfate + diphosphate. The protein operates within sulfur metabolism; hydrogen sulfide biosynthesis; sulfite from sulfate: step 1/3. Functionally, with CysN forms the ATP sulfurylase (ATPS) that catalyzes the adenylation of sulfate producing adenosine 5'-phosphosulfate (APS) and diphosphate, the first enzymatic step in sulfur assimilation pathway. APS synthesis involves the formation of a high-energy phosphoric-sulfuric acid anhydride bond driven by GTP hydrolysis by CysN coupled to ATP hydrolysis by CysD. The protein is Sulfate adenylyltransferase subunit 2 of Azotobacter vinelandii (strain DJ / ATCC BAA-1303).